The sequence spans 314 residues: GTPase Era (314 aa).

Positions 7-188 (RCGFAAVIGS…REFIAGLMPE (182 aa)) constitute an Era-type G domain. Residues 15-22 (GSPNAGKS) form a G1 region. 15-22 (GSPNAGKS) provides a ligand contact to GTP. Residues 41 to 45 (QTTRF) are G2. Residues 62-65 (DTPG) are G3. GTP-binding positions include 62-66 (DTPGV) and 138-141 (NKVD). Positions 138–141 (NKVD) are G4. Residues 167–169 (ISA) are G5. The KH type-2 domain occupies 219–296 (LHEELPYASM…HLFLNVKVDA (78 aa)).

This sequence belongs to the TRAFAC class TrmE-Era-EngA-EngB-Septin-like GTPase superfamily. Era GTPase family. As to quaternary structure, monomer.

It is found in the cytoplasm. The protein resides in the cell inner membrane. Functionally, an essential GTPase that binds both GDP and GTP, with rapid nucleotide exchange. Plays a role in 16S rRNA processing and 30S ribosomal subunit biogenesis and possibly also in cell cycle regulation and energy metabolism. The protein is GTPase Era of Maricaulis maris (strain MCS10) (Caulobacter maris).